The sequence spans 1576 residues: ABC transporter ALT5 (1576 aa).

Helical transmembrane passes span 27–47, 72–92, 99–119, 267–287, 289–309, 321–341, 387–407, 417–437, 500–520, and 525–545; these read LKFE…ILAV, ILGF…TQGT, GLFL…VIVC, LPLS…PILP, LVLI…TGFL, GLIG…SLYW, VLAG…AVIV, GFFA…ATVG, ITAM…TLAA, and VATS…APLG. An ABC transmembrane type-1 1 domain is found at 289 to 556; it reads LVLIGLSISQ…LFQSVAPLMS (268 aa). In terms of domain architecture, ABC transporter 1 spans 602–834; that stretch reads FRVVNGSFRW…NGGYLQSLCV (233 aa). 636 to 643 is an ATP binding site; it reads GPVGSGKS. The next 7 membrane-spanning stretches (helical) occupy residues 915–935, 957–977, 981–1001, 1035–1054, 1060–1078, 1142–1162, and 1171–1191; these read VVAL…FAFP, FWVG…FLTM, VTSI…AAIM, LIQF…VLAA, AAMY…KLYL, WLLF…VTLV, and GFAG…ASAM. An ABC transmembrane type-1 2 domain is found at 919–1199; it reads VAFLASAICY…AMQSYAKLET (281 aa). The 332-residue stretch at 1236 to 1567 folds into the ABC transporter 2 domain; the sequence is IKLDGVSASY…SHSKFRALCE (332 aa). Position 1278 to 1285 (1278 to 1285) interacts with ATP; it reads GRSGSGKS.

Belongs to the ABC transporter superfamily. ABCC family. Conjugate transporter (TC 3.A.1.208) subfamily.

Its subcellular location is the cell membrane. Functionally, ABC transporter that may provide the dual role AAL-toxin export and self-protection by allowing the fungus to evade the harmful effect of its own AAL-toxin production. In Alternaria alternata (Alternaria rot fungus), this protein is ABC transporter ALT5.